Reading from the N-terminus, the 154-residue chain is Large ribosomal subunit protein uL13 (154 aa).

Belongs to the universal ribosomal protein uL13 family. Part of the 50S ribosomal subunit.

Its function is as follows. This protein is one of the early assembly proteins of the 50S ribosomal subunit, although it is not seen to bind rRNA by itself. It is important during the early stages of 50S assembly. In Allorhizobium ampelinum (strain ATCC BAA-846 / DSM 112012 / S4) (Agrobacterium vitis (strain S4)), this protein is Large ribosomal subunit protein uL13.